The primary structure comprises 331 residues: MSKTFVKSKEMGELVNTPSWMDKGLGSQNEVKEEESRPGTYGMLSSLTEEHDSIEEEEEEEEDGEKPKRRGPKKKKMTKARLERFRARRVKANARERTRMHGLNDALDNLRRVMPCYSKTQKLSKIETLRLARNYIWALSEVLETGQTPEGKGFVEMLCKGLSQPTSNLVAGCLQLGPQSVLLEKHEDKSPICDSAISVHNFNYQSPGLPSPPYGHMETHLLHLKPQVFKSLGESSFGSHLPDCSTPPYEGPLTPPLSISGNFSLKQDGSPDLEKSYSFMPHYPSSSLSSGHVHSTPFQAGTPRYDVPIDMSYDSYPHHGIGTQLNTVFTE.

Residues 1-80 (MSKTFVKSKE…GPKKKKMTKA (80 aa)) form a disordered region. Residues 52 to 64 (DSIEEEEEEEEDG) are compositionally biased toward acidic residues. Residues 67–79 (PKRRGPKKKKMTK) show a composition bias toward basic residues. The 53-residue stretch at 87-139 (ARRVKANARERTRMHGLNDALDNLRRVMPCYSKTQKLSKIETLRLARNYIWAL) folds into the bHLH domain. Residues 246–265 (TPPYEGPLTPPLSISGNFSL) form a disordered region.

As to quaternary structure, efficient DNA binding requires dimerization with another bHLH protein. Post-translationally, serine or threonine phosphorylation within the basic region may regulate neurogenic activity.

It is found in the nucleus. Functionally, probably acts as a transcriptional activator. Mediates neuronal differentiation. Required for the regulation of amacrine cell fate specification in the retina. In Homo sapiens (Human), this protein is Neurogenic differentiation factor 4 (NEUROD4).